We begin with the raw amino-acid sequence, 216 residues long: Adenylate kinase (216 aa).

13 to 18 (GAGKGT) is an ATP binding site. Positions 33–66 (TTGDALRANKTKDITHLDVEYDTPGAYMDAGELV) are NMP. AMP-binding positions include T34, R39, 64–66 (ELV), 89–92 (GYPR), and Q96. The interval 125–162 (GRRVCEDCGATFHVSFNQPETEGVCDACGGSLYQREDD) is LID. R126 lines the ATP pocket. Zn(2+) is bound by residues C129 and C132. 135-136 (TF) contacts ATP. 2 residues coordinate Zn(2+): C149 and C152. AMP-binding residues include R159 and R170. Residue R198 coordinates ATP.

The protein belongs to the adenylate kinase family. Monomer.

The protein resides in the cytoplasm. It catalyses the reaction AMP + ATP = 2 ADP. Its pathway is purine metabolism; AMP biosynthesis via salvage pathway; AMP from ADP: step 1/1. Functionally, catalyzes the reversible transfer of the terminal phosphate group between ATP and AMP. Plays an important role in cellular energy homeostasis and in adenine nucleotide metabolism. The protein is Adenylate kinase of Halobacterium salinarum (strain ATCC 700922 / JCM 11081 / NRC-1) (Halobacterium halobium).